We begin with the raw amino-acid sequence, 287 residues long: Undecaprenyl-diphosphatase (287 aa).

The next 6 helical transmembrane spans lie at 50–70 (PGVS…IAYF), 99–119 (IAMA…KLFW), 128–148 (LRSV…LAVA), 206–226 (FLLG…DALA), 231–251 (AGPL…WLAI), and 263–283 (TWLF…WWSI).

The protein belongs to the UppP family.

Its subcellular location is the cell inner membrane. The enzyme catalyses di-trans,octa-cis-undecaprenyl diphosphate + H2O = di-trans,octa-cis-undecaprenyl phosphate + phosphate + H(+). In terms of biological role, catalyzes the dephosphorylation of undecaprenyl diphosphate (UPP). Confers resistance to bacitracin. This chain is Undecaprenyl-diphosphatase, found in Parasynechococcus marenigrum (strain WH8102).